The primary structure comprises 829 residues: DNA ligase (829 aa).

NAD(+) is bound by residues 38–42 (DAEYD), 87–88 (SL), and E127. K129 acts as the N6-AMP-lysine intermediate in catalysis. 4 residues coordinate NAD(+): R150, E187, K305, and K329. The Zn(2+) site is built by C455, C458, C473, and C479. Residues 534 to 564 (ETADKGSSENENGDAETVSGDLSKYNTQNGK) are disordered. The BRCT domain occupies 752–829 (GINKAVAGKT…SEAELLTLLC (78 aa)).

This sequence belongs to the NAD-dependent DNA ligase family. LigA subfamily. Mg(2+) serves as cofactor. Requires Mn(2+) as cofactor.

It catalyses the reaction NAD(+) + (deoxyribonucleotide)n-3'-hydroxyl + 5'-phospho-(deoxyribonucleotide)m = (deoxyribonucleotide)n+m + AMP + beta-nicotinamide D-nucleotide.. Its function is as follows. DNA ligase that catalyzes the formation of phosphodiester linkages between 5'-phosphoryl and 3'-hydroxyl groups in double-stranded DNA using NAD as a coenzyme and as the energy source for the reaction. It is essential for DNA replication and repair of damaged DNA. In Neisseria gonorrhoeae (strain ATCC 700825 / FA 1090), this protein is DNA ligase.